Here is a 258-residue protein sequence, read N- to C-terminus: Putative ankyrin repeat domain-containing protein 30B-like (258 aa).

Positions 1–21 (MERLSAAPVKGQTGPERPSPF) are disordered. 4 ANK repeats span residues 71–100 (KKRTALYWACANGHAEVVTLLVDRKCQLDV), 104–133 (ENRTILMKALQCQREACANILIDSGADPNI), 137–166 (YGNTAVHYAVNSENLSVVAKLLSCGADIEV), and 170–199 (AGHTPLLLAIRKRSEEIVEFLLTKNANANA). The segment at 216–258 (KISKNSQNSNPEGTSEGTPDEAAPLAERTPDTAESLVERTPDE) is disordered. Positions 218 to 232 (SKNSQNSNPEGTSEG) are enriched in polar residues. The segment covering 243 to 258 (RTPDTAESLVERTPDE) has biased composition (basic and acidic residues).

The protein is Putative ankyrin repeat domain-containing protein 30B-like (ANKRD30BL) of Homo sapiens (Human).